A 173-amino-acid polypeptide reads, in one-letter code: RTX-III toxin-activating lysine-acyltransferase ApxIIC (173 aa).

Residues His-29 and Asp-98 contribute to the active site.

The protein belongs to the RTX toxin acyltransferase family. As to quaternary structure, homodimer.

Its subcellular location is the cytoplasm. The enzyme catalyses a fatty acyl-[ACP] + L-lysyl-[protein] = N(6)-(fatty acyl)-L-lysyl-[protein] + holo-[ACP] + H(+). Protein-lysine acyltransferase that catalyzes fatty acylation of the protoxin, thereby converting it to the active toxin. The protein is RTX-III toxin-activating lysine-acyltransferase ApxIIC (apxIIIC) of Actinobacillus pleuropneumoniae (Haemophilus pleuropneumoniae).